Reading from the N-terminus, the 102-residue chain is Putative nuclear receptor corepressor 1-like protein NCOR1P1 (102 aa).

The span at 1 to 18 (MSSSGYPPNQGAFSTEQS) shows a compositional bias: polar residues. The segment at 1–68 (MSSSGYPPNQ…DQNASPSKLS (68 aa)) is disordered. Residues 68–100 (SKEELIECMDRVDREIAKVEQQILKLKKKQVKV) are a coiled coil.

This sequence belongs to the N-CoR nuclear receptor corepressors family.

This is Putative nuclear receptor corepressor 1-like protein NCOR1P1 (NCOR1P1) from Homo sapiens (Human).